The primary structure comprises 405 residues: L-rhamnonate dehydratase (405 aa).

Substrate contacts are provided by H33 and R59. D226, E252, and E280 together coordinate Mg(2+). The Proton acceptor role is filled by H329. E349 provides a ligand contact to substrate.

The protein belongs to the mandelate racemase/muconate lactonizing enzyme family. RhamD subfamily. As to quaternary structure, homooctamer; tetramer of dimers. The cofactor is Mg(2+).

The enzyme catalyses L-rhamnonate = 2-dehydro-3-deoxy-L-rhamnonate + H2O. Functionally, catalyzes the dehydration of L-rhamnonate to 2-keto-3-deoxy-L-rhamnonate (KDR). This is L-rhamnonate dehydratase from Escherichia coli (strain SMS-3-5 / SECEC).